Here is a 603-residue protein sequence, read N- to C-terminus: Aspartate--tRNA(Asp/Asn) ligase (603 aa).

Residues 205–208 (QLFK) are aspartate. Arg227 contacts L-aspartate. ATP is bound by residues 227 to 229 (RDE) and Gln236. His463 contributes to the L-aspartate binding site. Glu497 lines the ATP pocket. Arg504 contributes to the L-aspartate binding site. 549 to 552 (GMDR) contributes to the ATP binding site.

The protein belongs to the class-II aminoacyl-tRNA synthetase family. Type 1 subfamily. Homodimer.

The protein resides in the cytoplasm. It carries out the reaction tRNA(Asx) + L-aspartate + ATP = L-aspartyl-tRNA(Asx) + AMP + diphosphate. Its function is as follows. Aspartyl-tRNA synthetase with relaxed tRNA specificity since it is able to aspartylate not only its cognate tRNA(Asp) but also tRNA(Asn). Reaction proceeds in two steps: L-aspartate is first activated by ATP to form Asp-AMP and then transferred to the acceptor end of tRNA(Asp/Asn). The protein is Aspartate--tRNA(Asp/Asn) ligase of Anaeromyxobacter dehalogenans (strain 2CP-1 / ATCC BAA-258).